Consider the following 729-residue polypeptide: Golgin subfamily A member 5 (729 aa).

N-acetylserine is present on S2. The Cytoplasmic segment spans residues 2–696 (SWFADLAGRA…IFLRRYPIAR (695 aa)). 2 positions are modified to dimethylated arginine: R27 and R89. Disordered regions lie at residues 89–222 (RTVG…SQEL) and 626–645 (SASS…VDSG). Position 116 is a phosphoserine (S116). Basic and acidic residues predominate over residues 134-146 (PTGRVEVKKEKGR). The segment covering 148–167 (PVSPSSPSGVSSVNTSVTTT) has biased composition (low complexity). Composition is skewed to polar residues over residues 175–186 (GSQSPGVNSSDS) and 626–638 (SASS…SAIN). The stretch at 215–629 (GSSRSQELSN…LEQQVHSASS (415 aa)) forms a coiled coil. A helical; Anchor for type IV membrane protein membrane pass occupies residues 697-717 (VFVIIYMALLHLWVMIVLLTY). The Lumenal portion of the chain corresponds to 718–729 (SPEMHHDQPYGK).

In terms of assembly, homodimer. Interacts with RAB1A that has been activated by GTP-binding. Interacts with isoform CASP of CUX1. Highly phosphorylated during mitosis. Phosphorylation is barely detectable during interphase.

It is found in the golgi apparatus membrane. Its function is as follows. Involved in maintaining Golgi structure. Stimulates the formation of Golgi stacks and ribbons. Involved in intra-Golgi retrograde transport. The chain is Golgin subfamily A member 5 (Golga5) from Mus musculus (Mouse).